Consider the following 59-residue polypeptide: Putative HTH-type transcriptional regulator YneL (59 aa).

Residues 1 to 59 (MSPLRYQKWLRLNEVRRQMLNEHYDVTTAAYAVGYESYPISVGNIRGCLESHPREILPG) enclose the HTH araC/xylS-type domain. Residues 26–49 (VTTAAYAVGYESYPISVGNIRGCL) constitute a DNA-binding region (H-T-H motif).

The polypeptide is Putative HTH-type transcriptional regulator YneL (yneL) (Escherichia coli (strain K12)).